The chain runs to 2531 residues: Talin (2531 aa).

In terms of domain architecture, FERM spans 87 to 401; that stretch reads RPLRVRMMDE…GYIDIILKKK (315 aa). An interaction with VIN1 region spans residues 598–621; sequence GEKLLEAARGLAGAVRHLLKSAEP. The region spanning 2287-2526 is the I/LWEQ domain; that stretch reads TDWVDPSDPN…KIRHDKYKRH (240 aa). Positions 2466–2485 are disordered; that stretch reads AAKRSSEEGDDEEVSGGGQE.

In terms of assembly, interacts with VIN1 (vinculin); the interaction facilitates VIN1 binding to F-actin.

It localises to the cytoplasm. It is found in the cytoskeleton. Its subcellular location is the cell cortex. Its function is as follows. Probably involved in connections of major cytoskeletal structures to the plasma membrane. In Oscarella pearsei (Sponge), this protein is Talin.